Reading from the N-terminus, the 1065-residue chain is Presequence protease, mitochondrial (1065 aa).

A mitochondrion-targeting transit peptide spans 1 to 42; sequence MLRSFSGAGKCKCRIPVSRQPVCGRSLRISSTLTPWNQSRRA. Zn(2+) is bound at residue His117. The active-site Proton acceptor is the Glu120. Zn(2+) is bound at residue His121. The active site involves Glu193. Residue Glu230 coordinates Zn(2+).

It belongs to the peptidase M16 family. PreP subfamily. In terms of assembly, monomer and homodimer; homodimerization is induced by binding of the substrate. Zn(2+) serves as cofactor.

The protein resides in the mitochondrion intermembrane space. The protein localises to the mitochondrion matrix. Functionally, degrades mitochondrial transit peptides after their cleavage in the intermembrane space or in the matrix, and presequence peptides; clearance of these peptides is required to keep the presequence processing machinery running. Preferentially cleaves the N-terminal side of paired basic amino acid residues. Also degrades other unstructured peptides. May function as an ATP-dependent peptidase as opposed to a metalloendopeptidase. In Aspergillus fumigatus (strain ATCC MYA-4609 / CBS 101355 / FGSC A1100 / Af293) (Neosartorya fumigata), this protein is Presequence protease, mitochondrial (cym1).